The sequence spans 257 residues: MILLVDAGNTNIVLGVYKDKKYIASWRISTEGNKTSDEYSIQIMQLLNLNNLNPEDVKGIIVSSVVPNIMHSLENMLRRCFGQEPIIVGPGIKTGINIKYDNPKEVGADRIVNAVAAFEIYKRPVIIIDFGTATTFCSVTENGDYLGGCICPGLRISADALFEKAAKLPRVELEVPRKVICKNTVSSIQSGVLFGYIGQVEYIVKKMKEEMNDGIEPYVIATGGLANLIANETDAIDKVDSDLTLEGLKILYKKNRE.

6–13 (DAGNTNIV) serves as a coordination point for ATP. Residues tyrosine 100 and 107 to 110 (GADR) each bind substrate. The active-site Proton acceptor is the aspartate 109. Position 129 (aspartate 129) interacts with K(+). Threonine 132 is an ATP binding site. Position 184 (threonine 184) interacts with substrate.

It belongs to the type III pantothenate kinase family. In terms of assembly, homodimer. Requires NH4(+) as cofactor. K(+) is required as a cofactor.

The protein resides in the cytoplasm. It carries out the reaction (R)-pantothenate + ATP = (R)-4'-phosphopantothenate + ADP + H(+). It functions in the pathway cofactor biosynthesis; coenzyme A biosynthesis; CoA from (R)-pantothenate: step 1/5. Functionally, catalyzes the phosphorylation of pantothenate (Pan), the first step in CoA biosynthesis. This chain is Type III pantothenate kinase, found in Clostridium botulinum (strain Alaska E43 / Type E3).